Consider the following 150-residue polypeptide: 3-dehydroquinate dehydratase (150 aa).

Tyr26 functions as the Proton acceptor in the catalytic mechanism. 3 residues coordinate substrate: Asn77, His83, and Asp90. The active-site Proton donor is His103. Substrate is bound by residues 104–105 (LS) and Arg114.

This sequence belongs to the type-II 3-dehydroquinase family. In terms of assembly, homododecamer.

The enzyme catalyses 3-dehydroquinate = 3-dehydroshikimate + H2O. The protein operates within metabolic intermediate biosynthesis; chorismate biosynthesis; chorismate from D-erythrose 4-phosphate and phosphoenolpyruvate: step 3/7. In terms of biological role, catalyzes a trans-dehydration via an enolate intermediate. This chain is 3-dehydroquinate dehydratase, found in Histophilus somni (strain 129Pt) (Haemophilus somnus).